Here is a 447-residue protein sequence, read N- to C-terminus: ATP-dependent protease ATPase subunit HslU (447 aa).

ATP contacts are provided by residues I17, 59 to 64, D256, E321, and R393; that span reads GVGKTE.

The protein belongs to the ClpX chaperone family. HslU subfamily. A double ring-shaped homohexamer of HslV is capped on each side by a ring-shaped HslU homohexamer. The assembly of the HslU/HslV complex is dependent on binding of ATP.

The protein localises to the cytoplasm. Its function is as follows. ATPase subunit of a proteasome-like degradation complex; this subunit has chaperone activity. The binding of ATP and its subsequent hydrolysis by HslU are essential for unfolding of protein substrates subsequently hydrolyzed by HslV. HslU recognizes the N-terminal part of its protein substrates and unfolds these before they are guided to HslV for hydrolysis. The chain is ATP-dependent protease ATPase subunit HslU from Pseudomonas entomophila (strain L48).